The following is a 194-amino-acid chain: 13S globulin basic chain (194 aa).

One can recognise a Cupin type-1 domain in the interval 13–162 (ENIKSPQEAD…SFQISSEEAE (150 aa)).

This sequence belongs to the 11S seed storage protein (globulins) family. As to quaternary structure, hexamer; each subunit is composed of an acidic and a basic chain derived from a single precursor and linked by a disulfide bond. Cotyledons and endosperm protein bodies.

Seed storage protein with a relatively high level of Lys and Met. The polypeptide is 13S globulin basic chain (Fagopyrum esculentum (Common buckwheat)).